A 215-amino-acid chain; its full sequence is Cytochrome b6 (215 aa).

The helical transmembrane segment at 32–52 threads the bilayer; that stretch reads IFYCLGGITLVCFLIQFATGF. Position 35 (Cys35) interacts with heme c. His86 and His100 together coordinate heme b. 3 consecutive transmembrane segments (helical) span residues 90-110, 116-136, and 186-206; these read ASMM…TGGF, LTWV…VTGY, and AHTF…FLMI. Heme b-binding residues include His187 and His202.

Belongs to the cytochrome b family. PetB subfamily. In terms of assembly, the 4 large subunits of the cytochrome b6-f complex are cytochrome b6, subunit IV (17 kDa polypeptide, PetD), cytochrome f and the Rieske protein, while the 4 small subunits are PetG, PetL, PetM and PetN. The complex functions as a dimer. Heme b is required as a cofactor. Requires heme c as cofactor.

The protein localises to the cellular thylakoid membrane. In terms of biological role, component of the cytochrome b6-f complex, which mediates electron transfer between photosystem II (PSII) and photosystem I (PSI), cyclic electron flow around PSI, and state transitions. The chain is Cytochrome b6 from Nostoc punctiforme (strain ATCC 29133 / PCC 73102).